Consider the following 378-residue polypeptide: Alanine dehydrogenase (378 aa).

Substrate is bound by residues R15 and K74. Catalysis depends on H95, which acts as the Proton donor/acceptor. Residues S132, 176 to 177 (VV), D196, S218, 237 to 238 (VL), 265 to 268 (VAID), and 297 to 300 (VANM) each bind NAD(+). D268 (proton donor/acceptor) is an active-site residue.

Belongs to the AlaDH/PNT family. In terms of assembly, homohexamer. Trimer of dimer.

The protein localises to the cytoplasm. The enzyme catalyses L-alanine + NAD(+) + H2O = pyruvate + NH4(+) + NADH + H(+). It participates in amino-acid degradation; L-alanine degradation via dehydrogenase pathway; NH(3) and pyruvate from L-alanine: step 1/1. Functionally, catalyzes the reversible oxidative deamination of L-alanine to pyruvate. Oxidative deamination proceeds through a sequential, ordered ternary-binary mechanism, where NAD(+) binds first followed by L-alanine; the products are released in the order ammonia, pyruvate and NADH. Disruption blocks sporulation probably in stage V; 20-30% sporulation can be restored if the media is supplemented with pyruvate, suggesting lack of pyruvate blocks sporulation. Thus it is a key factor in the assimilation of L-alanine as an energy source via the tricarboxylic acid cycle during sporulation. The protein is Alanine dehydrogenase of Bacillus subtilis (strain 168).